A 342-amino-acid polypeptide reads, in one-letter code: Phosphoribosylformylglycinamidine cyclo-ligase (342 aa).

The protein belongs to the AIR synthase family.

The protein resides in the cytoplasm. The enzyme catalyses 2-formamido-N(1)-(5-O-phospho-beta-D-ribosyl)acetamidine + ATP = 5-amino-1-(5-phospho-beta-D-ribosyl)imidazole + ADP + phosphate + H(+). The protein operates within purine metabolism; IMP biosynthesis via de novo pathway; 5-amino-1-(5-phospho-D-ribosyl)imidazole from N(2)-formyl-N(1)-(5-phospho-D-ribosyl)glycinamide: step 2/2. The chain is Phosphoribosylformylglycinamidine cyclo-ligase from Staphylococcus aureus (strain MSSA476).